Here is a 438-residue protein sequence, read N- to C-terminus: High-affinity gluconate transporter (438 aa).

A run of 13 helical transmembrane segments spans residues 2 to 22, 23 to 43, 52 to 72, 108 to 128, 134 to 154, 174 to 194, 222 to 242, 258 to 278, 292 to 312, 327 to 347, 349 to 369, 370 to 390, and 418 to 438; these read PLVI…RFKM, NGFI…GMPL, AGVG…AMLG, VGFA…VFTI, IPLL…HGFL, TLLY…PVYA, FGVS…RAIA, FLGD…FTFG, LVSS…GGAF, SMMH…AAVL, IALG…APLI, ATTG…SVIF, and MLET…NMVI.

It belongs to the GntP permease family.

It localises to the cell inner membrane. It participates in carbohydrate acid metabolism; D-gluconate degradation. Part of the gluconate utilization system Gnt-I; high-affinity intake of gluconate. The chain is High-affinity gluconate transporter (gntT) from Escherichia coli (strain K12).